A 136-amino-acid polypeptide reads, in one-letter code: Large ribosomal subunit protein uL16 (136 aa).

This sequence belongs to the universal ribosomal protein uL16 family. In terms of assembly, part of the 50S ribosomal subunit.

Functionally, binds 23S rRNA and is also seen to make contacts with the A and possibly P site tRNAs. The chain is Large ribosomal subunit protein uL16 from Pectobacterium atrosepticum (strain SCRI 1043 / ATCC BAA-672) (Erwinia carotovora subsp. atroseptica).